We begin with the raw amino-acid sequence, 176 residues long: Ribosome rescue factor SmrB (176 aa).

The 76-residue stretch at leucine 97–serine 172 folds into the Smr domain.

It belongs to the SmrB family. In terms of assembly, associates with collided ribosomes, but not with correctly translating polysomes.

Acts as a ribosome collision sensor. Detects stalled/collided disomes (pairs of ribosomes where the leading ribosome is stalled and a second ribosome has collided with it) and endonucleolytically cleaves mRNA at the 5' boundary of the stalled ribosome. Stalled/collided disomes form a new interface (primarily via the 30S subunits) that binds SmrB. Cleaved mRNA becomes available for tmRNA ligation, leading to ribosomal subunit dissociation and rescue of stalled ribosomes. The sequence is that of Ribosome rescue factor SmrB from Vibrio campbellii (strain ATCC BAA-1116).